The sequence spans 146 residues: Hemoglobin subunit beta (146 aa).

N-acetylvaline is present on valine 1. One can recognise a Globin domain in the interval 2–146 (HLTAEEKNAI…VANALAHKYH (145 aa)). The residue at position 12 (threonine 12) is a Phosphothreonine. At lysine 59 the chain carries N6-acetyllysine. Heme b is bound at residue histidine 63. Lysine 82 is modified (N6-acetyllysine). Histidine 92 is a heme b binding site. Cysteine 93 bears the S-nitrosocysteine mark. Residue lysine 144 is modified to N6-acetyllysine.

It belongs to the globin family. In terms of assembly, heterotetramer of two alpha chains and two beta chains. As to expression, red blood cells.

Involved in oxygen transport from the lung to the various peripheral tissues. The sequence is that of Hemoglobin subunit beta (HBB) from Osphranter rufus (Red kangaroo).